The following is a 291-amino-acid chain: Small ribosomal subunit protein uS2 (291 aa).

Belongs to the universal ribosomal protein uS2 family.

This Lawsonia intracellularis (strain PHE/MN1-00) protein is Small ribosomal subunit protein uS2.